We begin with the raw amino-acid sequence, 366 residues long: Chorismate synthase (366 aa).

NADP(+) is bound by residues arginine 48 and arginine 54. FMN is bound by residues 125-127 (RSS), 238-239 (NA), glycine 278, 293-297 (KPTSS), and arginine 319.

This sequence belongs to the chorismate synthase family. As to quaternary structure, homotetramer. FMNH2 serves as cofactor.

The catalysed reaction is 5-O-(1-carboxyvinyl)-3-phosphoshikimate = chorismate + phosphate. It participates in metabolic intermediate biosynthesis; chorismate biosynthesis; chorismate from D-erythrose 4-phosphate and phosphoenolpyruvate: step 7/7. In terms of biological role, catalyzes the anti-1,4-elimination of the C-3 phosphate and the C-6 proR hydrogen from 5-enolpyruvylshikimate-3-phosphate (EPSP) to yield chorismate, which is the branch point compound that serves as the starting substrate for the three terminal pathways of aromatic amino acid biosynthesis. This reaction introduces a second double bond into the aromatic ring system. In Chromobacterium violaceum (strain ATCC 12472 / DSM 30191 / JCM 1249 / CCUG 213 / NBRC 12614 / NCIMB 9131 / NCTC 9757 / MK), this protein is Chorismate synthase.